The sequence spans 346 residues: SUMO-activating enzyme subunit 1 (346 aa).

The residue at position 1 (M1) is an N-acetylmethionine. V2 is subject to N-acetylvaline; in SUMO-activating enzyme subunit 1, N-terminally processed. S12 bears the Phosphoserine mark. K198 is modified (N6-acetyllysine).

It belongs to the ubiquitin-activating E1 family. Heterodimer of SAE1 and UBA2/SAE2. The heterodimer corresponds to the two domains that are encoded on a single polypeptide chain in ubiquitin-activating enzyme E1. Interacts with UBE2I.

It localises to the nucleus. Its pathway is protein modification; protein sumoylation. The heterodimer acts as an E1 ligase for SUMO1, SUMO2, SUMO3, and probably SUMO4. It mediates ATP-dependent activation of SUMO proteins followed by formation of a thioester bond between a SUMO protein and a conserved active site cysteine residue on UBA2/SAE2. This is SUMO-activating enzyme subunit 1 (SAE1) from Bos taurus (Bovine).